The sequence spans 465 residues: Chaperone protein dnaJ C76, chloroplastic (465 aa).

A chloroplast-targeting transit peptide spans 1–38 (MTPAIFSPTTLPPSTATWPCSTSQKLITVRSPLKFKCR). The J domain occupies 50-113 (DLYDLLGIDR…ISRQAYDKEQ (64 aa)). The interval 346-385 (AALPSSGNNNGSKASSNPQVTRKTFPSEEKPTSRRENRRQ) is disordered. Positions 350 to 362 (SSGNNNGSKASSN) are enriched in low complexity. Residues 370–384 (FPSEEKPTSRRENRR) show a composition bias toward basic and acidic residues.

This sequence belongs to the DnaJ family. In terms of tissue distribution, expressed in roots, exclusively in the stele.

It is found in the plastid. Its subcellular location is the chloroplast. May function together with HSC70 chaperone to assist protein folding and prevent protein aggregation during salt stress in the chloroplast. Involved in root development. Required for the position-dependent cell fate determination during root hair development. This is Chaperone protein dnaJ C76, chloroplastic from Arabidopsis thaliana (Mouse-ear cress).